The sequence spans 336 residues: uncharacterized protein (336 aa).

The disordered stretch occupies residues 196–222 (YKEGDDSNWDDFGSESEDDSKEAHSEE). Over residues 201 to 215 (DSNWDDFGSESEDDS) the composition is skewed to acidic residues. Phosphoserine is present on serine 211.

This is an uncharacterized protein from Schizosaccharomyces pombe (strain 972 / ATCC 24843) (Fission yeast).